The following is a 114-amino-acid chain: UPF0342 protein LSL_0473 (114 aa).

The protein belongs to the UPF0342 family.

The polypeptide is UPF0342 protein LSL_0473 (Ligilactobacillus salivarius (strain UCC118) (Lactobacillus salivarius)).